The following is a 147-amino-acid chain: Deoxyuridine 5'-triphosphate nucleotidohydrolase (147 aa).

Residues 67–69, Asn-80, and 84–86 each bind substrate; these read RSG and LID.

It belongs to the dUTPase family. Mg(2+) serves as cofactor.

It catalyses the reaction dUTP + H2O = dUMP + diphosphate + H(+). It participates in pyrimidine metabolism; dUMP biosynthesis; dUMP from dCTP (dUTP route): step 2/2. This enzyme is involved in nucleotide metabolism: it produces dUMP, the immediate precursor of thymidine nucleotides and it decreases the intracellular concentration of dUTP so that uracil cannot be incorporated into DNA. In Dictyoglomus turgidum (strain DSM 6724 / Z-1310), this protein is Deoxyuridine 5'-triphosphate nucleotidohydrolase.